The following is a 546-amino-acid chain: DDB1- and CUL4-associated factor 11 (546 aa).

Residues 1–10 show a composition bias toward polar residues; it reads MGSRNSSSAG. The segment at 1–40 is disordered; the sequence is MGSRNSSSAGTGSGDPSEGLPRRGAGLRRSEEEEEEDEDV. 2 positions are modified to phosphoserine: serine 73 and serine 75. Positions 79–100 are disordered; the sequence is HDSAWDGRLGDRYNPPVDATPD. The span at 80–89 shows a compositional bias: basic and acidic residues; sequence DSAWDGRLGD. WD repeat units follow at residues 170 to 210, 216 to 258, 263 to 302, 305 to 345, 353 to 392, 435 to 480, and 481 to 520; these read TYSQ…RKFK, DVGW…TALD, ERRF…RTLQ, SHED…EDDP, GHQD…SREG, GVLH…KKLT, and THKA…YFQD. The interval 521–546 is disordered; it reads DMPESEEHPSTPAPMSHPSTAFSSPQ. The segment covering 537-546 has biased composition (polar residues); sequence HPSTAFSSPQ.

As to quaternary structure, interacts with DDB1 and CUL4A.

It participates in protein modification; protein ubiquitination. Its function is as follows. May function as a substrate receptor for CUL4-DDB1 E3 ubiquitin-protein ligase complex. The protein is DDB1- and CUL4-associated factor 11 (DCAF11) of Bos taurus (Bovine).